Here is a 244-residue protein sequence, read N- to C-terminus: 3-deoxy-manno-octulosonate cytidylyltransferase (244 aa).

The protein belongs to the KdsB family.

Its subcellular location is the cytoplasm. The enzyme catalyses 3-deoxy-alpha-D-manno-oct-2-ulosonate + CTP = CMP-3-deoxy-beta-D-manno-octulosonate + diphosphate. It participates in nucleotide-sugar biosynthesis; CMP-3-deoxy-D-manno-octulosonate biosynthesis; CMP-3-deoxy-D-manno-octulosonate from 3-deoxy-D-manno-octulosonate and CTP: step 1/1. The protein operates within bacterial outer membrane biogenesis; lipopolysaccharide biosynthesis. Activates KDO (a required 8-carbon sugar) for incorporation into bacterial lipopolysaccharide in Gram-negative bacteria. The protein is 3-deoxy-manno-octulosonate cytidylyltransferase of Dichelobacter nodosus (strain VCS1703A).